The following is a 309-amino-acid chain: HPr kinase/phosphorylase (309 aa).

Residues His138 and Lys159 contribute to the active site. Residue 153–160 (GKSGIGKS) coordinates ATP. Ser160 is a binding site for Mg(2+). Asp177 functions as the Proton acceptor; for phosphorylation activity. Proton donor; for dephosphorylation activity in the catalytic mechanism. An important for the catalytic mechanism of both phosphorylation and dephosphorylation region spans residues 201 to 210 (IEVRGIGILD). Glu202 lines the Mg(2+) pocket. Arg243 is a catalytic residue. The segment at 264 to 269 (PIKPAR) is important for the catalytic mechanism of dephosphorylation.

Belongs to the HPrK/P family. Homohexamer. Mg(2+) is required as a cofactor.

It catalyses the reaction [HPr protein]-L-serine + ATP = [HPr protein]-O-phospho-L-serine + ADP + H(+). It carries out the reaction [HPr protein]-O-phospho-L-serine + phosphate + H(+) = [HPr protein]-L-serine + diphosphate. Functionally, catalyzes the ATP- as well as the pyrophosphate-dependent phosphorylation of a specific serine residue in HPr, a phosphocarrier protein of the phosphoenolpyruvate-dependent sugar phosphotransferase system (PTS). HprK/P also catalyzes the pyrophosphate-producing, inorganic phosphate-dependent dephosphorylation (phosphorolysis) of seryl-phosphorylated HPr (P-Ser-HPr). The two antagonistic activities of HprK/P are regulated by several intracellular metabolites, which change their concentration in response to the absence or presence of rapidly metabolisable carbon sources (glucose, fructose, etc.) in the growth medium. Therefore, by controlling the phosphorylation state of HPr, HPrK/P is a sensor enzyme that plays a major role in the regulation of carbon metabolism and sugar transport: it mediates carbon catabolite repression (CCR), and regulates PTS-catalyzed carbohydrate uptake and inducer exclusion. The polypeptide is HPr kinase/phosphorylase (Alkaliphilus metalliredigens (strain QYMF)).